The following is a 514-amino-acid chain: Bifunctional purine biosynthesis protein PurH (514 aa).

The region spanning 1–145 is the MGS-like domain; that stretch reads MIKRALISVS…KNYQDVAVIV (145 aa).

Belongs to the PurH family.

The enzyme catalyses (6R)-10-formyltetrahydrofolate + 5-amino-1-(5-phospho-beta-D-ribosyl)imidazole-4-carboxamide = 5-formamido-1-(5-phospho-D-ribosyl)imidazole-4-carboxamide + (6S)-5,6,7,8-tetrahydrofolate. The catalysed reaction is IMP + H2O = 5-formamido-1-(5-phospho-D-ribosyl)imidazole-4-carboxamide. Its pathway is purine metabolism; IMP biosynthesis via de novo pathway; 5-formamido-1-(5-phospho-D-ribosyl)imidazole-4-carboxamide from 5-amino-1-(5-phospho-D-ribosyl)imidazole-4-carboxamide (10-formyl THF route): step 1/1. It functions in the pathway purine metabolism; IMP biosynthesis via de novo pathway; IMP from 5-formamido-1-(5-phospho-D-ribosyl)imidazole-4-carboxamide: step 1/1. This Ruminiclostridium cellulolyticum (strain ATCC 35319 / DSM 5812 / JCM 6584 / H10) (Clostridium cellulolyticum) protein is Bifunctional purine biosynthesis protein PurH.